Consider the following 279-residue polypeptide: Diaminopimelate epimerase (279 aa).

The substrate site is built by Asn13 and Asn66. The active-site Proton donor is Cys75. Residues 76-77 (GN), Asn162, Asn195, and 213-214 (ER) contribute to the substrate site. The Proton acceptor role is filled by Cys222. 223 to 224 (GT) is a substrate binding site.

It belongs to the diaminopimelate epimerase family. In terms of assembly, homodimer.

The protein localises to the cytoplasm. It catalyses the reaction (2S,6S)-2,6-diaminopimelate = meso-2,6-diaminopimelate. It functions in the pathway amino-acid biosynthesis; L-lysine biosynthesis via DAP pathway; DL-2,6-diaminopimelate from LL-2,6-diaminopimelate: step 1/1. Catalyzes the stereoinversion of LL-2,6-diaminopimelate (L,L-DAP) to meso-diaminopimelate (meso-DAP), a precursor of L-lysine and an essential component of the bacterial peptidoglycan. The protein is Diaminopimelate epimerase of Synechocystis sp. (strain ATCC 27184 / PCC 6803 / Kazusa).